The sequence spans 132 residues: Acid shock protein (132 aa).

Residues 1 to 21 form the signal peptide; it reads MKKVLALVVAAAMGLSSAAFA. A compositionally biased stretch (low complexity) spans 20–45; sequence FAAETTTSSAAPATATATTTKAAPAK. The segment at 20–132 is disordered; sequence FAAETTTSSA…AAKPAAQPAA (113 aa). Residues 22–90 constitute a propeptide that is removed on maturation; sequence AETTTSSAAP…TTAPVEQKAQ (69 aa). Basic residues predominate over residues 62-71; the sequence is AAKKHHKKAV. 2 stretches are compositionally biased toward low complexity: residues 76-90 and 100-109; these read AAPA…QKAQ and AKPAVAQKAQ. Residues 110–119 are compositionally biased toward basic residues; sequence AAKKHHKKAV.

It belongs to the Asr family. Post-translationally, proteolytic processing gives rise to the active protein.

The protein localises to the periplasm. In terms of biological role, required for growth and/or survival at acidic conditions. The polypeptide is Acid shock protein (Enterobacter sp. (strain 638)).